A 35-amino-acid chain; its full sequence is 30 kDa neutral phosphatase (35 aa).

Positions 1-28 (KSSAEVQQTQQASIPASQKANLGNQNNI) are enriched in polar residues. Positions 1–35 (KSSAEVQQTQQASIPASQKANLGNQNNIMXVAXYQ) are disordered.

Functionally, highly cationic enzyme that can bind human or rat immunoglobulins as well as serum albumin, and could therefore be involved in post-infectious sequelae. The chain is 30 kDa neutral phosphatase from Staphylococcus aureus.